The chain runs to 685 residues: Probable serine/threonine-protein kinase CPE1738 (685 aa).

The 266-residue stretch at 10 to 275 (YELLQCVGEG…LEKIKKDPNV (266 aa)) folds into the Protein kinase domain. ATP contacts are provided by residues 16–24 (VGEGGMSFV) and Lys39. Glu143 serves as the catalytic Proton acceptor. The segment at 277 to 339 (ISSKSAEDED…NIQTKPQKAI (63 aa)) is disordered. Residues 306 to 329 (EPDEDDEDDDEYYEDDEDEDEEEN) are compositionally biased toward acidic residues. 4 PASTA domains span residues 376–440 (GKDV…TVSG), 441–508 (GEGQ…TISK), 513–581 (KSET…TINY), and 589–648 (EKPK…TMEE). A disordered region spans residues 480-500 (VPRGEVISQSPNANESVDKGS). The segment at 623–685 (DTAKVKSVSN…PKQPEQSGNN (63 aa)) is disordered. Composition is skewed to low complexity over residues 627–645 (VKSV…VSVT) and 654–685 (QPTQ…SGNN).

Belongs to the protein kinase superfamily. Ser/Thr protein kinase family.

It carries out the reaction L-seryl-[protein] + ATP = O-phospho-L-seryl-[protein] + ADP + H(+). It catalyses the reaction L-threonyl-[protein] + ATP = O-phospho-L-threonyl-[protein] + ADP + H(+). This Clostridium perfringens (strain 13 / Type A) protein is Probable serine/threonine-protein kinase CPE1738.